The sequence spans 676 residues: Ion-translocating oxidoreductase complex subunit C (676 aa).

2 4Fe-4S ferredoxin-type domains span residues 369 to 397 (GEPQ…QQLY) and 407 to 436 (KATT…VQYF). Residues C377, C380, C383, C387, C416, C419, C422, and C426 each coordinate [4Fe-4S] cluster. The interval 600–652 (ARKLEQQQANAEPEQQVDPRKAAVEAAIARAKARKLEQQQANAEPEEQVDPRK) is disordered. A compositionally biased stretch (low complexity) spans 605–615 (QQQANAEPEQQ).

Belongs to the 4Fe4S bacterial-type ferredoxin family. RnfC subfamily. In terms of assembly, the complex is composed of six subunits: RsxA, RsxB, RsxC, RsxD, RsxE and RsxG. The cofactor is [4Fe-4S] cluster.

The protein localises to the cell inner membrane. Its function is as follows. Part of a membrane-bound complex that couples electron transfer with translocation of ions across the membrane. Required to maintain the reduced state of SoxR. This chain is Ion-translocating oxidoreductase complex subunit C, found in Escherichia coli (strain SMS-3-5 / SECEC).